The following is a 306-amino-acid chain: Recombination-associated protein RdgC (306 aa).

It belongs to the RdgC family.

The protein localises to the cytoplasm. It localises to the nucleoid. May be involved in recombination. This is Recombination-associated protein RdgC from Burkholderia ambifaria (strain MC40-6).